Here is a 774-residue protein sequence, read N- to C-terminus: Probable ubiquitin-like-specific protease 2A (774 aa).

The disordered stretch occupies residues 118 to 141 (SSLSENDEVSTGEATNPASDPHEV). Catalysis depends on residues His-400, Asp-430, and Cys-485. Residues 548 to 568 (ILPANSKSEPPHCGVSNRNDQ) are disordered.

The protein belongs to the peptidase C48 family.

In terms of biological role, protease that catalyzes two essential functions in the SUMO pathway: processing of full-length SUMOs to their mature forms and deconjugation of SUMO from targeted proteins. This Arabidopsis thaliana (Mouse-ear cress) protein is Probable ubiquitin-like-specific protease 2A (ULP2A).